We begin with the raw amino-acid sequence, 165 residues long: Hydroxyproline-rich systemin A (165 aa).

A signal peptide spans 1–18 (MRVLFLIYLILSPFGAEA). A propeptide spanning residues 19 to 35 (RTLLENHEGLNVGSGYG) is cleaved from the precursor. 2 disordered regions span residues 33-70 (GYGR…TSEN) and 142-165 (YWNR…LHSY). Residues proline 42, proline 43, proline 45, proline 49, and proline 50 each carry the 4-hydroxyproline modification. Proline 42, proline 43, proline 45, proline 49, and proline 50 each carry an O-linked (Ara...) hydroxyproline glycan. The propeptide occupies 54–143 (VSNSVSPTRT…FDSKSDERYW (90 aa)). A 4-hydroxyproline mark is found at proline 150, proline 151, and proline 153. Proline 150, proline 151, and proline 153 each carry an O-linked (Ara...) hydroxyproline glycan. Residues 162-165 (LHSY) constitute a propeptide that is removed on maturation.

O-glycosylated; contains pentose side chains. In terms of tissue distribution, expressed in leaves.

Its subcellular location is the secreted. Its function is as follows. Activates a lipid-based signal transduction pathway in which linolenic acid is converted to jasmonic acid, a potent activator of defense gene transcription, including proteinase inhibitors. The sequence is that of Hydroxyproline-rich systemin A from Nicotiana tabacum (Common tobacco).